Reading from the N-terminus, the 194-residue chain is Mitochondrial inner membrane protease ATP23 (194 aa).

The tract at residues Met1–Gly20 is disordered. His96 is a Zn(2+) binding site. The active site involves Glu97. His100 is a Zn(2+) binding site.

It belongs to the peptidase M76 family.

It is found in the mitochondrion inner membrane. Has a dual role in the assembly of mitochondrial ATPase. Acts as a protease that removes the N-terminal 10 residues of mitochondrial ATPase CF(0) subunit 6 (ATP6) at the intermembrane space side. Also involved in the correct assembly of the membrane-embedded ATPase CF(0) particle, probably mediating association of ATP6 with the subunit 9 ring. The sequence is that of Mitochondrial inner membrane protease ATP23 from Arabidopsis thaliana (Mouse-ear cress).